The primary structure comprises 210 residues: MRYPFLRLAVFLAACIAPVWWLYQAWIFALGPDPGKVLVENFGVATLVMLLITLSMTPLQRLTGWSGWIVVRRQLGLWCFAYALLHLSMYALFILGLDWGQLGVELVKRPYIIVGALALLGLLALAVTSNRYSQRRLGARWKKLHRIIYVILGLGLLHMFWIVRADLKEWALYAGIGAFLLLLRIPVFARRIPRLGGAAKARSVKVQNNG.

The next 6 membrane-spanning stretches (helical) occupy residues 8–28 (LAVFLAACIAPVWWLYQAWIF), 37–57 (VLVENFGVATLVMLLITLSMT), 75–95 (LGLWCFAYALLHLSMYALFIL), 110–130 (PYIIVGALALLGLLALAVTSN), 147–167 (IIYVILGLGLLHMFWIVRADL), and 169–189 (EWALYAGIGAFLLLLRIPVFA).

Belongs to the MsrQ family. As to quaternary structure, heterodimer of a catalytic subunit (MsrP) and a heme-binding subunit (MsrQ). FMN serves as cofactor. Requires heme b as cofactor.

The protein resides in the cell inner membrane. In terms of biological role, part of the MsrPQ system that repairs oxidized periplasmic proteins containing methionine sulfoxide residues (Met-O), using respiratory chain electrons. Thus protects these proteins from oxidative-stress damage caused by reactive species of oxygen and chlorine generated by the host defense mechanisms. MsrPQ is essential for the maintenance of envelope integrity under bleach stress, rescuing a wide series of structurally unrelated periplasmic proteins from methionine oxidation. MsrQ provides electrons for reduction to the reductase catalytic subunit MsrP, using the quinone pool of the respiratory chain. The sequence is that of Protein-methionine-sulfoxide reductase heme-binding subunit MsrQ from Pseudomonas syringae pv. syringae (strain B728a).